Consider the following 186-residue polypeptide: Imidazoleglycerol-phosphate dehydratase (186 aa).

Belongs to the imidazoleglycerol-phosphate dehydratase family.

The protein localises to the cytoplasm. The enzyme catalyses D-erythro-1-(imidazol-4-yl)glycerol 3-phosphate = 3-(imidazol-4-yl)-2-oxopropyl phosphate + H2O. It participates in amino-acid biosynthesis; L-histidine biosynthesis; L-histidine from 5-phospho-alpha-D-ribose 1-diphosphate: step 6/9. The protein is Imidazoleglycerol-phosphate dehydratase of Dictyoglomus turgidum (strain DSM 6724 / Z-1310).